The following is a 477-amino-acid chain: Probable periplasmic serine endoprotease DegP-like (477 aa).

Positions 1–27 (MSIPRLKSYLMMFAAVLMLGQVLTAQA) are cleaved as a signal peptide. Catalysis depends on charge relay system residues H117, D147, and S220. Substrate contacts are provided by residues 218 to 220 (GNS) and 275 to 279 (LGVVI). PDZ domains follow at residues 264–355 (LKKD…IRNG) and 361–466 (DISV…LRQG).

Belongs to the peptidase S1C family.

It is found in the periplasm. It catalyses the reaction Acts on substrates that are at least partially unfolded. The cleavage site P1 residue is normally between a pair of hydrophobic residues, such as Val-|-Val.. Its function is as follows. Might be efficient in the degradation of transiently denatured and unfolded proteins which accumulate in the periplasm following stress conditions. The polypeptide is Probable periplasmic serine endoprotease DegP-like (Pseudomonas putida (strain ATCC 700007 / DSM 6899 / JCM 31910 / BCRC 17059 / LMG 24140 / F1)).